Here is a 323-residue protein sequence, read N- to C-terminus: Small ribosomal subunit protein uS3 (323 aa).

In terms of domain architecture, KH type-2 spans 17–86; sequence IDEFFADELG…DPQIDVQEVD (70 aa). The interval 251–303 is disordered; the sequence is ADPGVSSEDEEVVTEPVDIGGDDEDVEDIEVVSDDSGNDTETVAEEVEELDAE. Acidic residues predominate over residues 270–303; it reads GGDDEDVEDIEVVSDDSGNDTETVAEEVEELDAE.

Belongs to the universal ribosomal protein uS3 family. In terms of assembly, part of the 30S ribosomal subunit.

Its function is as follows. Binds the lower part of the 30S subunit head. This chain is Small ribosomal subunit protein uS3, found in Haloquadratum walsbyi (strain DSM 16790 / HBSQ001).